We begin with the raw amino-acid sequence, 147 residues long: Hemoglobin subunit gamma (147 aa).

The 145-residue stretch at 3–147 (NFTAEDKAAI…VASALASRYH (145 aa)) folds into the Globin domain. Heme b-binding residues include His64 and His93.

This sequence belongs to the globin family. In terms of assembly, heterotetramer of two alpha chains and two gamma chains in fetal hemoglobin (Hb F). In terms of tissue distribution, red blood cells.

Functionally, gamma chains make up the fetal hemoglobin F, in combination with alpha chains. This chain is Hemoglobin subunit gamma (HBG), found in Lagothrix lagotricha (Brown woolly monkey).